Consider the following 290-residue polypeptide: Small ribosomal subunit biogenesis GTPase RsgA (290 aa).

The CP-type G domain maps to 61–218 (SSELLRPAVA…IVDTPGFSTL (158 aa)). Residues 110-113 (NKVD) and 161-169 (GPSGAGKST) contribute to the GTP site. Residues cysteine 243, cysteine 248, histidine 250, and cysteine 256 each coordinate Zn(2+).

The protein belongs to the TRAFAC class YlqF/YawG GTPase family. RsgA subfamily. In terms of assembly, monomer. Associates with 30S ribosomal subunit, binds 16S rRNA. It depends on Zn(2+) as a cofactor.

The protein localises to the cytoplasm. In terms of biological role, one of several proteins that assist in the late maturation steps of the functional core of the 30S ribosomal subunit. Helps release RbfA from mature subunits. May play a role in the assembly of ribosomal proteins into the subunit. Circularly permuted GTPase that catalyzes slow GTP hydrolysis, GTPase activity is stimulated by the 30S ribosomal subunit. The chain is Small ribosomal subunit biogenesis GTPase RsgA from Clostridium botulinum (strain Eklund 17B / Type B).